Here is a 641-residue protein sequence, read N- to C-terminus: RING finger containing E3 ubiquitin-protein ligase WSV403 (641 aa).

The RING-type; atypical zinc-finger motif lies at 329-371 (CVGCLYDIEDEKRCYKLPCGHFMHTFCLSNKCSKANFRCVKCF).

It catalyses the reaction S-ubiquitinyl-[E2 ubiquitin-conjugating enzyme]-L-cysteine + [acceptor protein]-L-lysine = [E2 ubiquitin-conjugating enzyme]-L-cysteine + N(6)-ubiquitinyl-[acceptor protein]-L-lysine.. It participates in protein modification; protein ubiquitination. In terms of biological role, probable E3 ubiquitin-protein ligase which accepts ubiquitin from an E2 ubiquitin-conjugating enzyme in the form of a thioester and then directly transfers the ubiquitin to targeted substrates. This is RING finger containing E3 ubiquitin-protein ligase WSV403 from White spot syndrome virus (isolate Shrimp/China/Tongan/1996) (WSSV).